The primary structure comprises 1132 residues: Tyrosine-protein kinase JAK2 (1132 aa).

The segment at 1–239 (MGMACLTMTE…RYRFRRFIQQ (239 aa)) is interaction with cytokine/interferon/growth hormone receptors. The region spanning 37–380 (PVLQVYLYHS…GYYRLTADAH (344 aa)) is the FERM domain. The residue at position 119 (Y119) is a Phosphotyrosine; by autocatalysis. Phosphotyrosine occurs at positions 372 and 373. Residues 401–482 (HGPISMDFAI…SLKDLLNCYQ (82 aa)) enclose the SH2; atypical domain. S523 carries the phosphoserine modification. The Protein kinase 1 domain occupies 545–809 (LIFNESLGQG…AVIRDLNSLF (265 aa)). Phosphotyrosine occurs at positions 570 and 813. One can recognise a Protein kinase 2 domain in the interval 849 to 1126 (LKFLQQLGKG…RDLSLRVDQI (278 aa)). An ATP-binding site is contributed by 855–863 (LGKGNFGSV). Phosphotyrosine; by autocatalysis is present on Y868. Residue K882 coordinates ATP. Residues Y966 and Y972 each carry the phosphotyrosine; by autocatalysis modification. The active-site Proton acceptor is D976. Phosphotyrosine; by autocatalysis is present on residues Y1007 and Y1008.

The protein belongs to the protein kinase superfamily. Tyr protein kinase family. JAK subfamily. Interacts with IL23R, SKB1 and STAM2. Interacts with EPOR. Interacts with LYN. Interacts with SIRPA. Interacts with SH2B1. Interacts with TEC. Interacts with IFNGR2 (via intracellular domain). Interacts with LEPR (Isoform B). Interacts with HSP90AB1; promotes functional activation in a heat shock-dependent manner. Interacts with STRA6. Interacts with ASB2; the interaction targets JAK2 for Notch-induced proteasomal degradation. Mg(2+) serves as cofactor. Autophosphorylated, leading to regulate its activity. Leptin promotes phosphorylation on tyrosine residues, including phosphorylation on Tyr-813. Autophosphorylation on Tyr-119 in response to EPO down-regulates its kinase activity. Autophosphorylation on Tyr-868, Tyr-966 and Tyr-972 in response to growth hormone (GH) are required for maximal kinase activity. Also phosphorylated by TEC. Phosphorylated on tyrosine residues in response to interferon gamma signaling. Phosphorylated on tyrosine residues in response to a signaling cascade that is activated by increased cellular retinol. Post-translationally, undergoes Notch-induced ubiquitination and subsequent proteasomal degradation which is mediated by ASB1 or ASB2, the substrate-recognition components of probable ECS E3 ubiquitin-protein ligase complexes. As to expression, ubiquitously expressed throughout most tissues.

Its subcellular location is the endomembrane system. It localises to the cytoplasm. The protein localises to the nucleus. It carries out the reaction L-tyrosyl-[protein] + ATP = O-phospho-L-tyrosyl-[protein] + ADP + H(+). Its activity is regulated as follows. Regulated by autophosphorylation, can both activate or decrease activity. Heme regulates its activity by enhancing the phosphorylation on Tyr-1007 and Tyr-1008. Its function is as follows. Non-receptor tyrosine kinase involved in various processes such as cell growth, development, differentiation or histone modifications. Mediates essential signaling events in both innate and adaptive immunity. In the cytoplasm, plays a pivotal role in signal transduction via its association with type I receptors such as growth hormone (GHR), prolactin (PRLR), leptin (LEPR), erythropoietin (EPOR), thrombopoietin (THPO); or type II receptors including IFN-alpha, IFN-beta, IFN-gamma and multiple interleukins. Following ligand-binding to cell surface receptors, phosphorylates specific tyrosine residues on the cytoplasmic tails of the receptor, creating docking sites for STATs proteins. Subsequently, phosphorylates the STATs proteins once they are recruited to the receptor. Phosphorylated STATs then form homodimer or heterodimers and translocate to the nucleus to activate gene transcription. For example, cell stimulation with erythropoietin (EPO) during erythropoiesis leads to JAK2 autophosphorylation, activation, and its association with erythropoietin receptor (EPOR) that becomes phosphorylated in its cytoplasmic domain. Then, STAT5 (STAT5A or STAT5B) is recruited, phosphorylated and activated by JAK2. Once activated, dimerized STAT5 translocates into the nucleus and promotes the transcription of several essential genes involved in the modulation of erythropoiesis. Part of a signaling cascade that is activated by increased cellular retinol and that leads to the activation of STAT5 (STAT5A or STAT5B). In addition, JAK2 mediates angiotensin-2-induced ARHGEF1 phosphorylation. Plays a role in cell cycle by phosphorylating CDKN1B. Cooperates with TEC through reciprocal phosphorylation to mediate cytokine-driven activation of FOS transcription. In the nucleus, plays a key role in chromatin by specifically mediating phosphorylation of 'Tyr-41' of histone H3 (H3Y41ph), a specific tag that promotes exclusion of CBX5 (HP1 alpha) from chromatin. Up-regulates the potassium voltage-gated channel activity of KCNA3. This chain is Tyrosine-protein kinase JAK2, found in Rattus norvegicus (Rat).